Consider the following 369-residue polypeptide: UPF0284 protein cce_1085 (369 aa).

Belongs to the UPF0284 family.

The chain is UPF0284 protein cce_1085 from Crocosphaera subtropica (strain ATCC 51142 / BH68) (Cyanothece sp. (strain ATCC 51142)).